The chain runs to 287 residues: MIADKLFEKVEKNGVVCVGLDTSLDYIPEEFKSKFSNESDMLFAFNKEIIDATLDVSACFKVQIAYYEALGLKGLEAYKNTLSYLREKNALIIADIKRGDIAATAKMYAKAHFEGDFESDFITLNPYMGMDSIDPYLPYIEKNEKGVFVLVRTSNKGAQDIEYLEAGDGKKVYDVVGEKLNTLGKNYLGKHGYSSIGGVVGCTHQEEAKEMRDKLDTMPFLIPGYGAQGGTAKDVASYLKNGNGGIVNSSRKILLAYKAMEDNKNFAECARKEAISMRDSIREAILK.

K97 (proton donor) is an active-site residue.

It belongs to the OMP decarboxylase family. Type 2 subfamily.

It catalyses the reaction orotidine 5'-phosphate + H(+) = UMP + CO2. Its pathway is pyrimidine metabolism; UMP biosynthesis via de novo pathway; UMP from orotate: step 2/2. This chain is Orotidine 5'-phosphate decarboxylase, found in Clostridium perfringens (strain SM101 / Type A).